Here is a 916-residue protein sequence, read N- to C-terminus: Protein O-GlcNAcase (916 aa).

The interval 1–50 (MVQKESQAALEERESERNANPASVSGASLEPSAAPAPGEDNPSGAGAAAG) is disordered. The GH84 domain maps to 60-336 (FLCGVVEGFY…TLATWYKSNM (277 aa)). A protein is bound by residues G67, K98, and D174. D175 serves as the catalytic Proton donor. A protein-binding positions include Y219, 278 to 280 (WDN), D285, and N313. S364 carries the phosphoserine modification. Residues 440 to 480 (QGAALSGEPSALTKEEEKKQPDEEPMDMVVEKQEESEHKSD) form a disordered region. Composition is skewed to basic and acidic residues over residues 452–461 (TKEEEKKQPD) and 468–480 (VVEK…HKSD).

This sequence belongs to the glycosyl hydrolase 84 family. Monomer. Interacts with CLOCK. In terms of processing, proteolytically cleaved by caspase-3 during apoptosis. The fragments interact with each other; cleavage does not decrease enzyme activity. As to expression, detected in spleen (at protein level). Ubiquitous. Expressed at highest levels in the brain and spleen.

The protein resides in the nucleus. Its subcellular location is the cytoplasm. It carries out the reaction 3-O-(N-acetyl-beta-D-glucosaminyl)-L-seryl-[protein] + H2O = N-acetyl-D-glucosamine + L-seryl-[protein]. The enzyme catalyses 3-O-(N-acetyl-beta-D-glucosaminyl)-L-threonyl-[protein] + H2O = L-threonyl-[protein] + N-acetyl-D-glucosamine. Its activity is regulated as follows. Inhibited by Cu(2+), Hg(2+), Cd(2+) and Zn(2+) at 1 mM. Not inhibited by Co(2+), Mg(2+), Ca(2+), Mn(2+), Fe(3+) and EDTA. Also inhibited by sodium chloride at 1M and 2-amino-2-hydroxymethyl-1,3-propanediol (trishydroxymethylaminomethane) at 75 mM. Its function is as follows. Cleaves GlcNAc but not GalNAc from O-glycosylated proteins. Deglycosylates a large and diverse number of proteins, such as CRYAB, ELK1, GSDMD, LMNB1 and TAB1. Can use p-nitrophenyl-beta-GlcNAc and 4-methylumbelliferone-GlcNAc as substrates but not p-nitrophenyl-beta-GalNAc or p-nitrophenyl-alpha-GlcNAc (in vitro). Does not bind acetyl-CoA and does not have histone acetyltransferase activity. In terms of biological role, lacks enzyme activity. This is Protein O-GlcNAcase from Rattus norvegicus (Rat).